Reading from the N-terminus, the 333-residue chain is Probable tRNA pseudouridine synthase B (333 aa).

Residue Asp66 is the Nucleophile of the active site. The PUA domain occupies 233–308; that stretch reads LKKIIVKDSA…EVVEITRVIM (76 aa).

Belongs to the pseudouridine synthase TruB family. Type 2 subfamily.

The catalysed reaction is uridine(55) in tRNA = pseudouridine(55) in tRNA. In terms of biological role, could be responsible for synthesis of pseudouridine from uracil-55 in the psi GC loop of transfer RNAs. In Methanococcus maripaludis (strain C5 / ATCC BAA-1333), this protein is Probable tRNA pseudouridine synthase B.